Here is a 715-residue protein sequence, read N- to C-terminus: Fatty acid oxidation complex subunit alpha (715 aa).

The segment at 1-190 (MIYEGKAITV…KVGAVDAVVA (190 aa)) is enoyl-CoA hydratase/isomerase. Aspartate 297 lines the substrate pocket. Residues 312-715 (HDVKQAAVLG…MAKNGQRFFN (404 aa)) form a 3-hydroxyacyl-CoA dehydrogenase region. Residues methionine 325, aspartate 344, 401–403 (VVE), lysine 408, and serine 430 each bind NAD(+). Catalysis depends on histidine 451, which acts as the For 3-hydroxyacyl-CoA dehydrogenase activity. Asparagine 454 serves as a coordination point for NAD(+). 2 residues coordinate substrate: asparagine 501 and tyrosine 660.

In the N-terminal section; belongs to the enoyl-CoA hydratase/isomerase family. The protein in the C-terminal section; belongs to the 3-hydroxyacyl-CoA dehydrogenase family. As to quaternary structure, heterotetramer of two alpha chains (FadB) and two beta chains (FadA).

It catalyses the reaction a (3S)-3-hydroxyacyl-CoA + NAD(+) = a 3-oxoacyl-CoA + NADH + H(+). It carries out the reaction a (3S)-3-hydroxyacyl-CoA = a (2E)-enoyl-CoA + H2O. The catalysed reaction is a 4-saturated-(3S)-3-hydroxyacyl-CoA = a (3E)-enoyl-CoA + H2O. The enzyme catalyses (3S)-3-hydroxybutanoyl-CoA = (3R)-3-hydroxybutanoyl-CoA. It catalyses the reaction a (3Z)-enoyl-CoA = a 4-saturated (2E)-enoyl-CoA. It carries out the reaction a (3E)-enoyl-CoA = a 4-saturated (2E)-enoyl-CoA. The protein operates within lipid metabolism; fatty acid beta-oxidation. Its function is as follows. Involved in the aerobic and anaerobic degradation of long-chain fatty acids via beta-oxidation cycle. Catalyzes the formation of 3-oxoacyl-CoA from enoyl-CoA via L-3-hydroxyacyl-CoA. It can also use D-3-hydroxyacyl-CoA and cis-3-enoyl-CoA as substrate. The protein is Fatty acid oxidation complex subunit alpha of Pseudomonas putida (strain ATCC 700007 / DSM 6899 / JCM 31910 / BCRC 17059 / LMG 24140 / F1).